Consider the following 419-residue polypeptide: Tyrosine--tRNA ligase (419 aa).

Residue Tyr36 participates in L-tyrosine binding. A 'HIGH' region motif is present at residues 41–50 (PTGDSMHIGH). Positions 168 and 172 each coordinate L-tyrosine. A 'KMSKS' region motif is present at residues 230-234 (KFGKT). Position 233 (Lys233) interacts with ATP. One can recognise an S4 RNA-binding domain in the interval 352–419 (KNIVDFLVDA…KKKYFLARVK (68 aa)).

Belongs to the class-I aminoacyl-tRNA synthetase family. TyrS type 1 subfamily. As to quaternary structure, homodimer.

It is found in the cytoplasm. The catalysed reaction is tRNA(Tyr) + L-tyrosine + ATP = L-tyrosyl-tRNA(Tyr) + AMP + diphosphate + H(+). Functionally, catalyzes the attachment of tyrosine to tRNA(Tyr) in a two-step reaction: tyrosine is first activated by ATP to form Tyr-AMP and then transferred to the acceptor end of tRNA(Tyr). This chain is Tyrosine--tRNA ligase, found in Latilactobacillus sakei subsp. sakei (strain 23K) (Lactobacillus sakei subsp. sakei).